Consider the following 313-residue polypeptide: tRNA(Ile)-lysidine synthase (313 aa).

37–42 (SGGPDS) serves as a coordination point for ATP.

It belongs to the tRNA(Ile)-lysidine synthase family.

Its subcellular location is the cytoplasm. The enzyme catalyses cytidine(34) in tRNA(Ile2) + L-lysine + ATP = lysidine(34) in tRNA(Ile2) + AMP + diphosphate + H(+). Its function is as follows. Ligates lysine onto the cytidine present at position 34 of the AUA codon-specific tRNA(Ile) that contains the anticodon CAU, in an ATP-dependent manner. Cytidine is converted to lysidine, thus changing the amino acid specificity of the tRNA from methionine to isoleucine. In Corynebacterium efficiens (strain DSM 44549 / YS-314 / AJ 12310 / JCM 11189 / NBRC 100395), this protein is tRNA(Ile)-lysidine synthase.